Reading from the N-terminus, the 444-residue chain is Homogentisate 1,2-dioxygenase (444 aa).

The active-site Proton acceptor is the H298. Residues H341 and E347 each contribute to the Fe cation site. The homogentisate site is built by Y356 and H377. H377 contacts Fe cation.

This sequence belongs to the homogentisate dioxygenase family. As to quaternary structure, hexamer; dimer of trimers. Fe cation serves as cofactor.

It catalyses the reaction homogentisate + O2 = 4-maleylacetoacetate + H(+). It participates in amino-acid degradation; L-phenylalanine degradation; acetoacetate and fumarate from L-phenylalanine: step 4/6. Functionally, involved in the catabolism of homogentisate (2,5-dihydroxyphenylacetate or 2,5-OH-PhAc), a central intermediate in the degradation of phenylalanine and tyrosine. Catalyzes the oxidative ring cleavage of the aromatic ring of homogentisate to yield maleylacetoacetate. The polypeptide is Homogentisate 1,2-dioxygenase (Burkholderia lata (strain ATCC 17760 / DSM 23089 / LMG 22485 / NCIMB 9086 / R18194 / 383)).